Here is a 467-residue protein sequence, read N- to C-terminus: Argininosuccinate lyase (467 aa).

This sequence belongs to the lyase 1 family. Argininosuccinate lyase subfamily.

The protein resides in the cytoplasm. It catalyses the reaction 2-(N(omega)-L-arginino)succinate = fumarate + L-arginine. Its pathway is amino-acid biosynthesis; L-arginine biosynthesis; L-arginine from L-ornithine and carbamoyl phosphate: step 3/3. This Anaeromyxobacter sp. (strain K) protein is Argininosuccinate lyase.